The chain runs to 101 residues: uncharacterized protein (101 aa).

The helical transmembrane segment at 68-90 (LAFAFCGRANTFISCFISFASLI) threads the bilayer.

Its subcellular location is the membrane. This is an uncharacterized protein from Saccharomyces cerevisiae (strain ATCC 204508 / S288c) (Baker's yeast).